A 247-amino-acid chain; its full sequence is Carboxy-S-adenosyl-L-methionine synthase (247 aa).

Residues tyrosine 39, 64-66, 89-90, 117-118, asparagine 132, and arginine 199 each bind S-adenosyl-L-methionine; these read GCS, DN, and DI.

It belongs to the class I-like SAM-binding methyltransferase superfamily. Cx-SAM synthase family. As to quaternary structure, homodimer.

It carries out the reaction prephenate + S-adenosyl-L-methionine = carboxy-S-adenosyl-L-methionine + 3-phenylpyruvate + H2O. Functionally, catalyzes the conversion of S-adenosyl-L-methionine (SAM) to carboxy-S-adenosyl-L-methionine (Cx-SAM). This is Carboxy-S-adenosyl-L-methionine synthase from Salmonella choleraesuis (strain SC-B67).